The sequence spans 295 residues: Undecaprenyl-diphosphatase (295 aa).

The next 7 membrane-spanning stretches (helical) occupy residues 12 to 34 (IAIA…HAVV), 50 to 70 (FLPF…LYFW), 95 to 115 (IFML…LLEH), 120 to 140 (LFES…LLLF), 209 to 229 (AHFS…LEVP), 243 to 263 (TAAL…AFLM), and 272 to 292 (WALK…LAWL).

Belongs to the UppP family.

It is found in the cell inner membrane. It catalyses the reaction di-trans,octa-cis-undecaprenyl diphosphate + H2O = di-trans,octa-cis-undecaprenyl phosphate + phosphate + H(+). In terms of biological role, catalyzes the dephosphorylation of undecaprenyl diphosphate (UPP). Confers resistance to bacitracin. The polypeptide is Undecaprenyl-diphosphatase (Granulibacter bethesdensis (strain ATCC BAA-1260 / CGDNIH1)).